Here is a 360-residue protein sequence, read N- to C-terminus: Hydroxycarboxylic acid receptor 2 (360 aa).

The Extracellular portion of the chain corresponds to 1 to 30; that stretch reads MSKQNHFLVINGKNCCVFRDENIAKVLPPV. The chain crosses the membrane as a helical span at residues 31 to 51; the sequence is LGLEFVFGLLGNGLALWIFCF. At 52-60 the chain is on the cytoplasmic side; it reads HLKSWKSSR. Residues 61–81 traverse the membrane as a helical segment; that stretch reads IFLFNLAVADFLLIICLPFLT. Residues 82-98 are Extracellular-facing; it reads DNYVQNWDWRFGSIPCR. An intrachain disulfide couples C97 to C174. Residues 99-119 traverse the membrane as a helical segment; that stretch reads VMLFMLAMNRQGSIIFLTVVA. Over 120–140 the chain is Cytoplasmic; that stretch reads VDRYFRVVHPHHFLNKISNRT. A helical transmembrane segment spans residues 141-161; sequence AAIISCFLWGITIGLTVHLLY. Topologically, residues 162–189 are extracellular; it reads TDMMTRNGDANLCSSFSICYTFRWHDAM. The helical transmembrane segment at 190–210 threads the bilayer; it reads FLLEFFLPLGIILFCSGRIIW. Over 211 to 226 the chain is Cytoplasmic; sequence SLRQRQMDRHVKIKRA. A helical transmembrane segment spans residues 227 to 247; the sequence is INFIMVVAIVFVICFLPSVAV. The Extracellular segment spans residues 248-270; it reads RIRIFWLLYKHNVRNCDIYSSVD. Residues 271–291 form a helical membrane-spanning segment; the sequence is LAFFTTLSFTYMNSMLDPVVY. Topologically, residues 292 to 360 are cytoplasmic; the sequence is YFSSPSFPNF…SPPYLASTSR (69 aa). Residues 320 to 360 form a disordered region; it reads NNRSTSVELTGDPSTIRSIPGALMTDPSEPGSPPYLASTSR. The segment covering 321–336 has biased composition (polar residues); it reads NRSTSVELTGDPSTIR. A Phosphoserine modification is found at S325.

The protein belongs to the G-protein coupled receptor 1 family. Expressed in adipose tissue, lung and spleen.

It is found in the cell membrane. In terms of biological role, acts as a high affinity receptor for both nicotinic acid (also known as niacin) and (D)-beta-hydroxybutyrate and mediates increased adiponectin secretion and decreased lipolysis through G(i)-protein-mediated inhibition of adenylyl cyclase. This pharmacological effect requires nicotinic acid doses that are much higher than those provided by a normal diet. Mediates nicotinic acid-induced apoptosis in mature neutrophils. Receptor activation by nicotinic acid results in reduced cAMP levels which may affect activity of cAMP-dependent protein kinase A and phosphorylation of target proteins, leading to neutrophil apoptosis. The rank order of potency for the displacement of nicotinic acid binding is 5-methyl pyrazole-3-carboxylic acid = pyridine-3-acetic acid &gt; acifran &gt; 5-methyl nicotinic acid = acipimox &gt;&gt; nicotinuric acid = nicotinamide. This Rattus norvegicus (Rat) protein is Hydroxycarboxylic acid receptor 2 (Hcar2).